The following is a 277-amino-acid chain: Shikimate dehydrogenase (NADP(+)) (277 aa).

Residues 15 to 17 (SLS) and Thr-62 contribute to the shikimate site. Lys-66 acts as the Proton acceptor in catalysis. 2 residues coordinate shikimate: Asn-87 and Asp-102. Residues 127–131 (GAGGA), 151–156 (NRTRDK), and Ile-219 each bind NADP(+). Tyr-221 provides a ligand contact to shikimate. Gly-242 contacts NADP(+).

The protein belongs to the shikimate dehydrogenase family. As to quaternary structure, homodimer.

The enzyme catalyses shikimate + NADP(+) = 3-dehydroshikimate + NADPH + H(+). It participates in metabolic intermediate biosynthesis; chorismate biosynthesis; chorismate from D-erythrose 4-phosphate and phosphoenolpyruvate: step 4/7. In terms of biological role, involved in the biosynthesis of the chorismate, which leads to the biosynthesis of aromatic amino acids. Catalyzes the reversible NADPH linked reduction of 3-dehydroshikimate (DHSA) to yield shikimate (SA). The protein is Shikimate dehydrogenase (NADP(+)) of Bacillus mycoides (strain KBAB4) (Bacillus weihenstephanensis).